Consider the following 86-residue polypeptide: Large ribosomal subunit protein bL27 (86 aa).

The disordered stretch occupies residues 1 to 22 (MATKKAGGSSRNGRDSAGRRLG).

It belongs to the bacterial ribosomal protein bL27 family.

In Rickettsia peacockii (strain Rustic), this protein is Large ribosomal subunit protein bL27.